The primary structure comprises 1825 residues: Serine protease/ABC transporter B family protein tagD (1825 aa).

A signal peptide spans 1–26 (MKSNTNIRVLLVSGLILIFIFLGIKF). Residues 307–727 (PKAIFGTKDT…NAVFDTFAGA (421 aa)) form the Peptidase S8 domain. Residues aspartate 338 and histidine 384 each act as charge relay system in the active site. Asparagine 629 is a glycosylation site (N-linked (GlcNAc...) asparagine). The Charge relay system role is filled by serine 652. N-linked (GlcNAc...) asparagine glycosylation is found at asparagine 704, asparagine 781, asparagine 849, and asparagine 896. The chain crosses the membrane as a helical span at residues 971–991 (YIVIIVAGGTMSLIITVLILI). Asparagine 1018 carries N-linked (GlcNAc...) asparagine glycosylation. 4 consecutive transmembrane segments (helical) span residues 1071-1091 (FIIEITISTACSLVATAASIL), 1116-1136 (FIIIFLLALLEFVFSTISSWI), 1189-1209 (GILLSVSVGICKFVGSLVFIF), and 1210-1230 (TISWKLSLAFFATVPVLAIVT). Positions 1075 to 1358 (ITISTACSLV…LFGVYSSYVQ (284 aa)) constitute an ABC transmembrane type-1 domain. Residue asparagine 1295 is glycosylated (N-linked (GlcNAc...) asparagine). Transmembrane regions (helical) follow at residues 1304–1324 (WLMVESLAFIILYFGAYLAIQ) and 1327–1347 (FTVGLLVSFSLYIGYVIDSST). The tract at residues 1386–1529 (DNIIDTNQDN…NDDPNDNNGI (144 aa)) is disordered. Residues 1388-1402 (IIDTNQDNNNNNNND) are compositionally biased toward low complexity. A compositionally biased stretch (acidic residues) spans 1403–1415 (DISDSSSDDDDDN). An N-linked (GlcNAc...) asparagine glycan is attached at asparagine 1424. Residues 1465-1494 (GEGIDNNNNNNNDNNINDDNNQQDPNNNNN) show a composition bias toward low complexity. Residues 1495-1514 (EIDDDGDDDGDDDDEGEDEN) show a composition bias toward acidic residues. Residues 1515 to 1529 (NNNNNNDDPNDNNGI) are compositionally biased toward low complexity. The ABC transporter domain maps to 1576 to 1813 (IEFKNVSFCY…KGKYYRMFAF (238 aa)). N-linked (GlcNAc...) asparagine glycosylation is present at asparagine 1580. 1611–1618 (GPSGSGKS) provides a ligand contact to ATP. Asparagine 1715 and asparagine 1755 each carry an N-linked (GlcNAc...) asparagine glycan.

In the C-terminal section; belongs to the ABC transporter superfamily. ABCB family. Multidrug resistance exporter (TC 3.A.1.201) subfamily. The protein in the N-terminal section; belongs to the peptidase S8 family.

It localises to the membrane. The protein is Serine protease/ABC transporter B family protein tagD (tagD) of Dictyostelium discoideum (Social amoeba).